Consider the following 493-residue polypeptide: Probable cytosol aminopeptidase (493 aa).

Positions 259 and 264 each coordinate Mn(2+). The active site involves lysine 271. Residues aspartate 282, aspartate 341, and glutamate 343 each contribute to the Mn(2+) site. Arginine 345 is an active-site residue.

This sequence belongs to the peptidase M17 family. Mn(2+) is required as a cofactor.

Its subcellular location is the cytoplasm. The enzyme catalyses Release of an N-terminal amino acid, Xaa-|-Yaa-, in which Xaa is preferably Leu, but may be other amino acids including Pro although not Arg or Lys, and Yaa may be Pro. Amino acid amides and methyl esters are also readily hydrolyzed, but rates on arylamides are exceedingly low.. It carries out the reaction Release of an N-terminal amino acid, preferentially leucine, but not glutamic or aspartic acids.. Functionally, presumably involved in the processing and regular turnover of intracellular proteins. Catalyzes the removal of unsubstituted N-terminal amino acids from various peptides. This chain is Probable cytosol aminopeptidase, found in Bacillus cytotoxicus (strain DSM 22905 / CIP 110041 / 391-98 / NVH 391-98).